Reading from the N-terminus, the 533-residue chain is Sterol 26-hydroxylase, mitochondrial (533 aa).

A mitochondrion-targeting transit peptide spans 1–32; that stretch reads MAVLSRMRLRWALLDTRVMGHGLCPQGARAKA. Positions 38–58 are disordered; that stretch reads LRDHESTEGPGTGQDRPRLRS. N6-acetyllysine is present on residues K142 and K375. Residues 386–400 form a sterol-binding region; it reads PLLKAVIKETLRLYP. C479 lines the heme pocket. N6-acetyllysine is present on residues K512 and K523.

Belongs to the cytochrome P450 family. As to quaternary structure, interacts with HSP70; this interaction is required for initial targeting to mitochondria. Requires heme as cofactor. In terms of tissue distribution, expressed in liver, kidney and ovary.

It localises to the mitochondrion inner membrane. The enzyme catalyses 5beta-cholestane-3alpha,7alpha,12alpha-triol + 6 reduced [adrenodoxin] + 3 O2 + 5 H(+) = (25R)-3alpha,7alpha,12alpha-trihydroxy-5beta-cholestan-26-oate + 6 oxidized [adrenodoxin] + 4 H2O. It carries out the reaction cholestanol + 2 reduced [adrenodoxin] + O2 + 2 H(+) = (25R)-26-hydroxycholestanol + 2 oxidized [adrenodoxin] + H2O. The catalysed reaction is (25R)-3beta-hydroxycholest-5-en-7-one-26-al + 2 reduced [adrenodoxin] + O2 + H(+) = (25R)-3beta-hydroxycholest-5-en-7-one-26-oate + 2 oxidized [adrenodoxin] + H2O. It catalyses the reaction (25R)-3beta,26-dihydroxycholest-5-en-7-one + 2 reduced [adrenodoxin] + O2 + 2 H(+) = (25R)-3beta-hydroxycholest-5-en-7-one-26-al + 2 oxidized [adrenodoxin] + 2 H2O. The enzyme catalyses 7-oxocholesterol + 2 reduced [adrenodoxin] + O2 + 2 H(+) = (25R)-3beta,26-dihydroxycholest-5-en-7-one + 2 oxidized [adrenodoxin] + H2O. It carries out the reaction calciol + 2 reduced [adrenodoxin] + O2 + 2 H(+) = calcidiol + 2 oxidized [adrenodoxin] + H2O. The catalysed reaction is (25R)-5beta-cholestane-3alpha,7alpha,12alpha,26-tetrol + 2 reduced [adrenodoxin] + O2 + 2 H(+) = (25R)-3alpha,7alpha,12alpha-trihydroxy-5beta-cholestan-26-al + 2 oxidized [adrenodoxin] + 2 H2O. It catalyses the reaction 2 reduced [adrenodoxin] + cholesterol + O2 + 2 H(+) = (25R)-cholest-5-ene-3beta,26-diol + 2 oxidized [adrenodoxin] + H2O. The enzyme catalyses (25R)-3beta,4beta-dihydroxycholest-5-en-26-al + 2 reduced [adrenodoxin] + O2 + H(+) = (25R)-3beta,4beta-dihydroxycholest-5-en-26-oate + 2 oxidized [adrenodoxin] + H2O. It carries out the reaction (25R)-4beta,26-dihydroxycholesterol + 2 reduced [adrenodoxin] + O2 + 2 H(+) = (25R)-3beta,4beta-dihydroxycholest-5-en-26-al + 2 oxidized [adrenodoxin] + 2 H2O. The catalysed reaction is 4beta-hydroxycholesterol + 2 reduced [adrenodoxin] + O2 + 2 H(+) = (25R)-4beta,26-dihydroxycholesterol + 2 oxidized [adrenodoxin] + H2O. It catalyses the reaction (25R)-3beta-hydroxy-5-cholesten-26-al + 2 reduced [adrenodoxin] + O2 + H(+) = (25R)-3beta-hydroxy-5-cholestenoate + 2 oxidized [adrenodoxin] + H2O. The enzyme catalyses (25R)-cholest-5-ene-3beta,26-diol + 2 reduced [adrenodoxin] + O2 + 2 H(+) = (25R)-3beta-hydroxy-5-cholesten-26-al + 2 oxidized [adrenodoxin] + 2 H2O. It carries out the reaction (25R)-3alpha,7alpha,12alpha-trihydroxy-5beta-cholestan-26-al + 2 reduced [adrenodoxin] + O2 + H(+) = (25R)-3alpha,7alpha,12alpha-trihydroxy-5beta-cholestan-26-oate + 2 oxidized [adrenodoxin] + H2O. The catalysed reaction is 5beta-cholestane-3alpha,7alpha,12alpha-triol + 2 reduced [adrenodoxin] + O2 + 2 H(+) = (25R)-5beta-cholestane-3alpha,7alpha,12alpha,26-tetrol + 2 oxidized [adrenodoxin] + H2O. It functions in the pathway hormone biosynthesis; cholecalciferol biosynthesis. The protein operates within steroid metabolism; cholesterol degradation. It participates in lipid metabolism; bile acid biosynthesis. Cytochrome P450 monooxygenase that catalyzes regio- and stereospecific hydroxylation of cholesterol and its derivatives. Hydroxylates (with R stereochemistry) the terminal methyl group of cholesterol side-chain in a three step reaction to yield at first a C26 alcohol, then a C26 aldehyde and finally a C26 acid. Regulates cholesterol homeostasis by catalyzing the conversion of excess cholesterol to bile acids via both the 'neutral' (classic) and the 'acid' (alternative) pathways. May also regulate cholesterol homeostasis via generation of active oxysterols, which act as ligands for NR1H2 and NR1H3 nuclear receptors, modulating the transcription of genes involved in lipid metabolism. Plays a role in cholestanol metabolism in the cerebellum. Similarly to cholesterol, hydroxylates cholestanol and may facilitate sterol diffusion through the blood-brain barrier to the systemic circulation for further degradation. Also hydroxylates retinal 7-ketocholesterol, a noxious oxysterol with pro-inflammatory and pro-apoptotic effects, and may play a role in its elimination from the retinal pigment epithelium. May play a redundant role in vitamin D biosynthesis. Catalyzes 25-hydroxylation of vitamin D3 that is required for its conversion to a functionally active form. In Rattus norvegicus (Rat), this protein is Sterol 26-hydroxylase, mitochondrial (Cyp27a1).